Here is a 181-residue protein sequence, read N- to C-terminus: Ribonuclease HII (181 aa).

The RNase H type-2 domain occupies 1-181; that stretch reads MICGIDEVGR…NLHRRSFKFI (181 aa). 3 residues coordinate a divalent metal cation: aspartate 6, glutamate 7, and aspartate 98.

This sequence belongs to the RNase HII family. The cofactor is Mn(2+). Mg(2+) serves as cofactor.

The protein localises to the cytoplasm. It catalyses the reaction Endonucleolytic cleavage to 5'-phosphomonoester.. Functionally, endonuclease that specifically degrades the RNA of RNA-DNA hybrids. This chain is Ribonuclease HII, found in Borrelia hermsii (strain HS1 / DAH).